Here is a 205-residue protein sequence, read N- to C-terminus: Holliday junction branch migration complex subunit RuvA (205 aa).

Residues 1–62 (MFEYVTGYVE…EDIMALYGFK (62 aa)) form a domain I region. The tract at residues 63–141 (TREERLLFTK…DVVPDAFVDL (79 aa)) is domain II. The tract at residues 142 to 152 (FSDTESFDTKK) is flexible linker. The domain III stretch occupies residues 153–205 (GSSVELDEALEALRALGYAEREVSRVVPELLKESLTTDQYIKKALSLLLNGKR).

This sequence belongs to the RuvA family. Homotetramer. Forms an RuvA(8)-RuvB(12)-Holliday junction (HJ) complex. HJ DNA is sandwiched between 2 RuvA tetramers; dsDNA enters through RuvA and exits via RuvB. An RuvB hexamer assembles on each DNA strand where it exits the tetramer. Each RuvB hexamer is contacted by two RuvA subunits (via domain III) on 2 adjacent RuvB subunits; this complex drives branch migration. In the full resolvosome a probable DNA-RuvA(4)-RuvB(12)-RuvC(2) complex forms which resolves the HJ.

Its subcellular location is the cytoplasm. In terms of biological role, the RuvA-RuvB-RuvC complex processes Holliday junction (HJ) DNA during genetic recombination and DNA repair, while the RuvA-RuvB complex plays an important role in the rescue of blocked DNA replication forks via replication fork reversal (RFR). RuvA specifically binds to HJ cruciform DNA, conferring on it an open structure. The RuvB hexamer acts as an ATP-dependent pump, pulling dsDNA into and through the RuvAB complex. HJ branch migration allows RuvC to scan DNA until it finds its consensus sequence, where it cleaves and resolves the cruciform DNA. This chain is Holliday junction branch migration complex subunit RuvA, found in Bacillus mycoides (strain KBAB4) (Bacillus weihenstephanensis).